The chain runs to 295 residues: uncharacterized protein (295 aa).

The signal sequence occupies residues 1-19 (MFRKFLFIPLLIVTSLVKA). The interval 274–295 (KRNNPPLKNNNAKSKNSYETHK) is disordered. Positions 276–288 (NNPPLKNNNAKSK) are enriched in low complexity.

This is an uncharacterized protein from Rickettsia typhi (strain ATCC VR-144 / Wilmington).